Here is a 216-residue protein sequence, read N- to C-terminus: Trimethylamine corrinoid protein 1 (216 aa).

The B12-binding N-terminal domain occupies 1–92 (MASKEEIIAK…EMEKRKSETK (92 aa)). The region spanning 94-216 (LGTVVIGTIE…VVSKVRAVLL (123 aa)) is the B12-binding domain. H107 serves as a coordination point for methylcob(III)alamin.

This sequence belongs to the methylamine corrinoid protein family. As to quaternary structure, can form a complex with MttB.

Its pathway is one-carbon metabolism; methanogenesis from trimethylamine. Acts probably as a methyl group carrier between MttB and either MtbA or MtaA. In Methanosarcina acetivorans (strain ATCC 35395 / DSM 2834 / JCM 12185 / C2A), this protein is Trimethylamine corrinoid protein 1 (mttC1).